Reading from the N-terminus, the 511-residue chain is GMP synthase [glutamine-hydrolyzing] (511 aa).

The 191-residue stretch at 5 to 195 folds into the Glutamine amidotransferase type-1 domain; that stretch reads AILVLDFGSQ…VFKICQAQIN (191 aa). The active-site Nucleophile is cysteine 82. Catalysis depends on residues histidine 169 and glutamate 171. In terms of domain architecture, GMPS ATP-PPase spans 196–386; that stretch reads WSLEGNLETI…LGIKKESLYR (191 aa). 223–229 is an ATP binding site; it reads SGGTDSL.

Homodimer.

It catalyses the reaction XMP + L-glutamine + ATP + H2O = GMP + L-glutamate + AMP + diphosphate + 2 H(+). It participates in purine metabolism; GMP biosynthesis; GMP from XMP (L-Gln route): step 1/1. In terms of biological role, catalyzes the synthesis of GMP from XMP. This Borreliella burgdorferi (strain N40) (Borrelia burgdorferi) protein is GMP synthase [glutamine-hydrolyzing] (guaA).